Here is a 283-residue protein sequence, read N- to C-terminus: 1-deoxypentalenic acid 11-beta-hydroxylase (283 aa).

R117 contributes to the substrate binding site. The Fe cation site is built by H135 and D137. Residues 135–137 (HQD) and W151 each bind 2-oxoglutarate. R186 provides a ligand contact to substrate. H224 serves as a coordination point for Fe cation. Positions 226 and 238 each coordinate 2-oxoglutarate. Positions 251–283 (HRGFNALTPWPESAKDASKGIMSKITGTPTTAE) are disordered.

It belongs to the PhyH family. Fe cation serves as cofactor. It depends on L-ascorbate as a cofactor.

It carries out the reaction 1-deoxypentalenate + 2-oxoglutarate + O2 = 1-deoxy-11beta-hydroxypentalenate + succinate + CO2. The protein operates within antibiotic biosynthesis; pentalenolactone biosynthesis. Its function is as follows. Catalyzes the conversion of 1-deoxypentalenic acid to 11-beta-hydroxy-1-deoxypentalenic acid in the biosynthesis of pentalenolactone antibiotic. In Streptomyces arenae, this protein is 1-deoxypentalenic acid 11-beta-hydroxylase (pntH).